The following is a 266-amino-acid chain: GTP cyclohydrolase FolE2 (266 aa).

Belongs to the GTP cyclohydrolase IV family.

It carries out the reaction GTP + H2O = 7,8-dihydroneopterin 3'-triphosphate + formate + H(+). The protein operates within cofactor biosynthesis; 7,8-dihydroneopterin triphosphate biosynthesis; 7,8-dihydroneopterin triphosphate from GTP: step 1/1. Its function is as follows. Converts GTP to 7,8-dihydroneopterin triphosphate. This chain is GTP cyclohydrolase FolE2, found in Methylobacillus flagellatus (strain ATCC 51484 / DSM 6875 / VKM B-1610 / KT).